We begin with the raw amino-acid sequence, 215 residues long: Ribonuclease T (215 aa).

An Exonuclease domain is found at 20 to 194; that stretch reads VVIDVETAGF…YDTERTAVLF (175 aa). Asp23, Glu25, His181, and Asp186 together coordinate Mg(2+). The active-site Proton donor/acceptor is the His181.

The protein belongs to the RNase T family. In terms of assembly, homodimer. The cofactor is Mg(2+).

In terms of biological role, trims short 3' overhangs of a variety of RNA species, leaving a one or two nucleotide 3' overhang. Responsible for the end-turnover of tRNA: specifically removes the terminal AMP residue from uncharged tRNA (tRNA-C-C-A). Also appears to be involved in tRNA biosynthesis. This is Ribonuclease T from Citrobacter koseri (strain ATCC BAA-895 / CDC 4225-83 / SGSC4696).